The sequence spans 805 residues: Endonuclease MutS2 (805 aa).

An ATP-binding site is contributed by 344–351 (GPNGGGKT). The interval 705-724 (RSRSEKLQAASEARPSAPPG) is disordered. A Smr domain is found at 729 to 804 (LDVRGLRVEE…GDAVTVVSLR (76 aa)).

Belongs to the DNA mismatch repair MutS family. MutS2 subfamily. As to quaternary structure, homodimer. Binds to stalled ribosomes, contacting rRNA.

Endonuclease that is involved in the suppression of homologous recombination and thus may have a key role in the control of bacterial genetic diversity. Its function is as follows. Acts as a ribosome collision sensor, splitting the ribosome into its 2 subunits. Detects stalled/collided 70S ribosomes which it binds and splits by an ATP-hydrolysis driven conformational change. Acts upstream of the ribosome quality control system (RQC), a ribosome-associated complex that mediates the extraction of incompletely synthesized nascent chains from stalled ribosomes and their subsequent degradation. Probably generates substrates for RQC. The polypeptide is Endonuclease MutS2 (Anaeromyxobacter sp. (strain Fw109-5)).